The following is a 335-amino-acid chain: D-alanine--D-alanine ligase (335 aa).

One can recognise an ATP-grasp domain in the interval 124–329; it reads KMWFSALGVP…FTHYLYSNIK (206 aa). An ATP-binding site is contributed by 154–209; the sequence is ALENWGSIFIKAASQGSSVGCYRVDSQDELVSSLEQAFSFSPYVIVEKTINARELE. Residues Asp283, Glu296, and Asn298 each coordinate Mg(2+).

It belongs to the D-alanine--D-alanine ligase family. Mg(2+) serves as cofactor. The cofactor is Mn(2+).

It is found in the cytoplasm. The enzyme catalyses 2 D-alanine + ATP = D-alanyl-D-alanine + ADP + phosphate + H(+). Its pathway is cell wall biogenesis; peptidoglycan biosynthesis. Its function is as follows. Cell wall formation. The chain is D-alanine--D-alanine ligase from Shewanella woodyi (strain ATCC 51908 / MS32).